We begin with the raw amino-acid sequence, 1216 residues long: ATP-dependent helicase/nuclease subunit A (1216 aa).

A UvrD-like helicase ATP-binding domain is found at 26–488; that stretch reads QKKTAEQIEA…ILLKANFRSS (463 aa). An ATP-binding site is contributed by 47–54; it reads ASAGSGKT. A UvrD-like helicase C-terminal domain is found at 515-802; the sequence is KHQLVFANTK…ELMTIHKSKG (288 aa).

It belongs to the helicase family. AddA subfamily. Heterodimer of AddA and AddB/RexB. Mg(2+) is required as a cofactor.

The enzyme catalyses Couples ATP hydrolysis with the unwinding of duplex DNA by translocating in the 3'-5' direction.. It carries out the reaction ATP + H2O = ADP + phosphate + H(+). The heterodimer acts as both an ATP-dependent DNA helicase and an ATP-dependent, dual-direction single-stranded exonuclease. Recognizes the chi site generating a DNA molecule suitable for the initiation of homologous recombination. The AddA nuclease domain is required for chi fragment generation; this subunit has the helicase and 3' -&gt; 5' nuclease activities. The protein is ATP-dependent helicase/nuclease subunit A of Streptococcus pneumoniae (strain ATCC 700669 / Spain 23F-1).